We begin with the raw amino-acid sequence, 464 residues long: 3-isopropylmalate dehydratase large subunit (464 aa).

[4Fe-4S] cluster is bound by residues C345, C405, and C408.

It belongs to the aconitase/IPM isomerase family. LeuC type 1 subfamily. In terms of assembly, heterodimer of LeuC and LeuD. It depends on [4Fe-4S] cluster as a cofactor.

It catalyses the reaction (2R,3S)-3-isopropylmalate = (2S)-2-isopropylmalate. Its pathway is amino-acid biosynthesis; L-leucine biosynthesis; L-leucine from 3-methyl-2-oxobutanoate: step 2/4. In terms of biological role, catalyzes the isomerization between 2-isopropylmalate and 3-isopropylmalate, via the formation of 2-isopropylmaleate. The sequence is that of 3-isopropylmalate dehydratase large subunit from Bacteroides fragilis (strain ATCC 25285 / DSM 2151 / CCUG 4856 / JCM 11019 / LMG 10263 / NCTC 9343 / Onslow / VPI 2553 / EN-2).